A 353-amino-acid polypeptide reads, in one-letter code: Guanine nucleotide-binding protein G(q) subunit alpha (353 aa).

S-palmitoyl cysteine attachment occurs at residues Cys-3 and Cys-4. Residues 32–353 enclose the G-alpha domain; the sequence is RELKLLLLGT…QLNLKEYNLV (322 aa). Residues 35–48 form a G1 motif region; the sequence is KLLLLGTGESGKST. Residues 40–47, 174–180, 199–203, 268–271, and Ala-325 each bind GTP; these read GTGESGKS, LRVRVPT, DVGGQ, and NKKD. Residues Ser-47 and Thr-180 each coordinate Mg(2+). The segment at 172–180 is G2 motif; that stretch reads DILRVRVPT. Positions 195–204 are G3 motif; the sequence is FRMVDVGGQR. The interval 264 to 271 is G4 motif; it reads ILFLNKKD. Residues 323-328 form a G5 motif region; it reads TCATDT.

Belongs to the G-alpha family. G(q) subfamily. As to quaternary structure, g proteins are composed of 3 units; alpha, beta and gamma. The alpha chain contains the guanine nucleotide binding site.

Guanine nucleotide-binding proteins (G proteins) are involved as modulators or transducers in various transmembrane signaling systems. This Lymnaea stagnalis (Great pond snail) protein is Guanine nucleotide-binding protein G(q) subunit alpha.